Consider the following 615-residue polypeptide: Medium-chain acyl-CoA ligase ACSF2, mitochondrial (615 aa).

The N-terminal 42 residues, 1–42, are a transit peptide targeting the mitochondrion; sequence MAVYVGMLRVARLCARSPRVLGARVGLSRVWQEARLWGVRPL. N6-acetyllysine is present on Lys-179. At Lys-182 the chain carries N6-acetyllysine; alternate. Lys-182 bears the N6-succinyllysine; alternate mark. N6-acetyllysine is present on Lys-199. ATP is bound at residue 263-271; sequence TSGTTGSPK. N6-acetyllysine is present on residues Lys-340 and Lys-398. N6-succinyllysine is present on Lys-478. Positions 493 and 508 each coordinate ATP. Position 510 is an N6-acetyllysine (Lys-510). N6-acetyllysine; alternate occurs at positions 544 and 570. 2 positions are modified to N6-succinyllysine; alternate: Lys-544 and Lys-570. An ATP-binding site is contributed by Lys-599. An N6-succinyllysine modification is found at Lys-599.

It belongs to the ATP-dependent AMP-binding enzyme family.

The protein resides in the mitochondrion. It carries out the reaction a medium-chain fatty acid + ATP + CoA = a medium-chain fatty acyl-CoA + AMP + diphosphate. It catalyses the reaction octanoate + ATP + CoA = octanoyl-CoA + AMP + diphosphate. Its function is as follows. Acyl-CoA synthases catalyze the initial reaction in fatty acid metabolism, by forming a thioester with CoA. Has some preference toward medium-chain substrates. Plays a role in adipocyte differentiation. In Bos taurus (Bovine), this protein is Medium-chain acyl-CoA ligase ACSF2, mitochondrial.